Consider the following 102-residue polypeptide: Small ribosomal subunit protein uS10 (102 aa).

This sequence belongs to the universal ribosomal protein uS10 family. Part of the 30S ribosomal subunit.

Involved in the binding of tRNA to the ribosomes. This chain is Small ribosomal subunit protein uS10, found in Salinispora tropica (strain ATCC BAA-916 / DSM 44818 / JCM 13857 / NBRC 105044 / CNB-440).